The sequence spans 539 residues: CTP synthase (539 aa).

Residues 1–267 (MTKFIFVTGG…DDLVIKRLDL (267 aa)) are amidoligase domain. Position 13 (Ser-13) interacts with CTP. UTP is bound at residue Ser-13. 14–19 (SLGKGI) contributes to the ATP binding site. An L-glutamine-binding site is contributed by Tyr-54. Asp-71 serves as a coordination point for ATP. Residues Asp-71 and Glu-141 each coordinate Mg(2+). Residues 148 to 150 (DIE), 188 to 193 (KTKPTQ), and Lys-224 contribute to the CTP site. Residues 188–193 (KTKPTQ) and Lys-224 contribute to the UTP site. Residue 240-242 (RDA) participates in ATP binding. Residues 293–535 (TIGLVGKYVS…IEAANKYKEA (243 aa)) form the Glutamine amidotransferase type-1 domain. Gly-355 is a binding site for L-glutamine. Cys-382 serves as the catalytic Nucleophile; for glutamine hydrolysis. Residues 383–386 (LGMQ), Glu-406, and Arg-463 each bind L-glutamine. Residues His-508 and Glu-510 contribute to the active site.

The protein belongs to the CTP synthase family. In terms of assembly, homotetramer.

It carries out the reaction UTP + L-glutamine + ATP + H2O = CTP + L-glutamate + ADP + phosphate + 2 H(+). It catalyses the reaction L-glutamine + H2O = L-glutamate + NH4(+). The enzyme catalyses UTP + NH4(+) + ATP = CTP + ADP + phosphate + 2 H(+). Its pathway is pyrimidine metabolism; CTP biosynthesis via de novo pathway; CTP from UDP: step 2/2. With respect to regulation, allosterically activated by GTP, when glutamine is the substrate; GTP has no effect on the reaction when ammonia is the substrate. The allosteric effector GTP functions by stabilizing the protein conformation that binds the tetrahedral intermediate(s) formed during glutamine hydrolysis. Inhibited by the product CTP, via allosteric rather than competitive inhibition. Catalyzes the ATP-dependent amination of UTP to CTP with either L-glutamine or ammonia as the source of nitrogen. Regulates intracellular CTP levels through interactions with the four ribonucleotide triphosphates. The sequence is that of CTP synthase from Staphylococcus carnosus (strain TM300).